A 48-amino-acid polypeptide reads, in one-letter code: Phosphatidylserine decarboxylase proenzyme (48 aa).

It belongs to the phosphatidylserine decarboxylase family. Type 1 subfamily. Pyruvate serves as cofactor.

It carries out the reaction a 1,2-diacyl-sn-glycero-3-phospho-L-serine + H(+) = a 1,2-diacyl-sn-glycero-3-phosphoethanolamine + CO2. Its pathway is phospholipid metabolism; phosphatidylethanolamine biosynthesis; phosphatidylethanolamine from CDP-diacylglycerol: step 2/2. The chain is Phosphatidylserine decarboxylase proenzyme (psd) from Azotobacter vinelandii.